A 94-amino-acid polypeptide reads, in one-letter code: Integration host factor subunit beta (94 aa).

Belongs to the bacterial histone-like protein family. As to quaternary structure, heterodimer of an alpha and a beta chain.

Functionally, this protein is one of the two subunits of integration host factor, a specific DNA-binding protein that functions in genetic recombination as well as in transcriptional and translational control. This is Integration host factor subunit beta from Yersinia enterocolitica serotype O:8 / biotype 1B (strain NCTC 13174 / 8081).